Here is a 270-residue protein sequence, read N- to C-terminus: Aliphatic sulfonates import ATP-binding protein SsuB 2 (270 aa).

One can recognise an ABC transporter domain in the interval 17-241; that stretch reads LLDLRIARKL…PRDRRDPSLA (225 aa). 50–57 serves as a coordination point for ATP; it reads GPSGCGKS.

The protein belongs to the ABC transporter superfamily. Aliphatic sulfonates importer (TC 3.A.1.17.2) family. The complex is composed of two ATP-binding proteins (SsuB), two transmembrane proteins (SsuC) and a solute-binding protein (SsuA).

It is found in the cell inner membrane. It catalyses the reaction ATP + H2O + aliphatic sulfonate-[sulfonate-binding protein]Side 1 = ADP + phosphate + aliphatic sulfonateSide 2 + [sulfonate-binding protein]Side 1.. Its function is as follows. Part of the ABC transporter complex SsuABC involved in aliphatic sulfonates import. Responsible for energy coupling to the transport system. The polypeptide is Aliphatic sulfonates import ATP-binding protein SsuB 2 (Burkholderia cenocepacia (strain HI2424)).